The primary structure comprises 310 residues: Small ribosomal subunit biogenesis GTPase RsgA (310 aa).

Residues 77–238 (LSKQSHILAA…IIDTPGIKGF (162 aa)) enclose the CP-type G domain. GTP-binding positions include 126–129 (NKVD) and 180–188 (GHSGVGKST). Zn(2+) is bound by residues Cys262, Cys267, His269, and Cys275.

Belongs to the TRAFAC class YlqF/YawG GTPase family. RsgA subfamily. In terms of assembly, monomer. Associates with 30S ribosomal subunit, binds 16S rRNA. Requires Zn(2+) as cofactor.

It is found in the cytoplasm. Its function is as follows. One of several proteins that assist in the late maturation steps of the functional core of the 30S ribosomal subunit. Helps release RbfA from mature subunits. May play a role in the assembly of ribosomal proteins into the subunit. Circularly permuted GTPase that catalyzes slow GTP hydrolysis, GTPase activity is stimulated by the 30S ribosomal subunit. This Bacteroides fragilis (strain YCH46) protein is Small ribosomal subunit biogenesis GTPase RsgA.